The chain runs to 266 residues: MSRAGFDKYITVFSPEGSLYQVEYAFKAVTYAGLLTVAIRCKDAVLVFTQHSVPDKLMRPETITSLYNVNDNTGVCITGRAPDGKALVQKARNEASEYKYRYGMPMLVSVLAKPWQDMAQVRTQQAGMRLMGTIMTFVGMEQNDEDGAWIPQIYCVDPAGGAAVHACAVGKKQIEACAFLEKKQKNAPFHTLSQKEAAMIALAALQSALGESLRASGVEVGRCTADDHHFLRVSDREVKKWLTPLAKPGYRAAYVLVRHTFHVVNP.

Belongs to the peptidase T1A family. The 26S proteasome consists of a 20S proteasome core and two 19S regulatory subunits. The 20S proteasome core is composed of 28 subunits that are arranged in four stacked rings, resulting in a barrel-shaped structure. The two end rings are each formed by seven alpha subunits, and the two central rings are each formed by seven beta subunits. The catalytic chamber with the active sites is on the inside of the barrel.

It localises to the cytoplasm. The protein localises to the nucleus. Functionally, the proteasome is a multicatalytic proteinase complex which is characterized by its ability to cleave peptides with Arg, Phe, Tyr, Leu, and Glu adjacent to the leaving group at neutral or slightly basic pH. The proteasome has an ATP-dependent proteolytic activity. The sequence is that of Proteasome subunit alpha type-1 from Trypanosoma brucei brucei.